Here is a 428-residue protein sequence, read N- to C-terminus: Glutamate--tRNA ligase 2 (428 aa).

The 'HIGH' region motif lies at 6 to 16; sequence PSPTGDMRTEQ.

This sequence belongs to the class-I aminoacyl-tRNA synthetase family. Glutamate--tRNA ligase type 1 subfamily. As to quaternary structure, monomer.

The protein localises to the cytoplasm. It catalyses the reaction tRNA(Glu) + L-glutamate + ATP = L-glutamyl-tRNA(Glu) + AMP + diphosphate. Its function is as follows. Catalyzes the attachment of glutamate to tRNA(Glu) in a two-step reaction: glutamate is first activated by ATP to form Glu-AMP and then transferred to the acceptor end of tRNA(Glu). This chain is Glutamate--tRNA ligase 2, found in Sulfurovum sp. (strain NBC37-1).